Reading from the N-terminus, the 453-residue chain is Bifunctional protein GlmU (453 aa).

Positions 1–231 are pyrophosphorylase; it reads MERTCLAIIL…EVEMTGCNNR (231 aa). UDP-N-acetyl-alpha-D-glucosamine contacts are provided by residues 10–13, Lys24, Gln77, 82–83, 105–107, Gly143, Glu157, Asn172, and Asn229; these read LAAG, GT, and YGD. Asp107 contributes to the Mg(2+) binding site. Asn229 is a binding site for Mg(2+). Residues 232 to 252 are linker; the sequence is AELAFIERLWQERRRHELMLS. The segment at 253–453 is N-acetyltransferase; that stretch reads GVTMIAPETV…AIKAAKKGSH (201 aa). Arg318 and Lys336 together coordinate UDP-N-acetyl-alpha-D-glucosamine. His348 (proton acceptor) is an active-site residue. 2 residues coordinate UDP-N-acetyl-alpha-D-glucosamine: Tyr351 and Asn362. Acetyl-CoA contacts are provided by residues Ala365, 371-372, Ser390, Ser408, and Arg425; that span reads NY.

This sequence in the N-terminal section; belongs to the N-acetylglucosamine-1-phosphate uridyltransferase family. The protein in the C-terminal section; belongs to the transferase hexapeptide repeat family. As to quaternary structure, homotrimer. Requires Mg(2+) as cofactor.

It localises to the cytoplasm. The catalysed reaction is alpha-D-glucosamine 1-phosphate + acetyl-CoA = N-acetyl-alpha-D-glucosamine 1-phosphate + CoA + H(+). It carries out the reaction N-acetyl-alpha-D-glucosamine 1-phosphate + UTP + H(+) = UDP-N-acetyl-alpha-D-glucosamine + diphosphate. It participates in nucleotide-sugar biosynthesis; UDP-N-acetyl-alpha-D-glucosamine biosynthesis; N-acetyl-alpha-D-glucosamine 1-phosphate from alpha-D-glucosamine 6-phosphate (route II): step 2/2. The protein operates within nucleotide-sugar biosynthesis; UDP-N-acetyl-alpha-D-glucosamine biosynthesis; UDP-N-acetyl-alpha-D-glucosamine from N-acetyl-alpha-D-glucosamine 1-phosphate: step 1/1. It functions in the pathway bacterial outer membrane biogenesis; LPS lipid A biosynthesis. Catalyzes the last two sequential reactions in the de novo biosynthetic pathway for UDP-N-acetylglucosamine (UDP-GlcNAc). The C-terminal domain catalyzes the transfer of acetyl group from acetyl coenzyme A to glucosamine-1-phosphate (GlcN-1-P) to produce N-acetylglucosamine-1-phosphate (GlcNAc-1-P), which is converted into UDP-GlcNAc by the transfer of uridine 5-monophosphate (from uridine 5-triphosphate), a reaction catalyzed by the N-terminal domain. The protein is Bifunctional protein GlmU of Rhizobium rhizogenes (strain K84 / ATCC BAA-868) (Agrobacterium radiobacter).